We begin with the raw amino-acid sequence, 138 residues long: Small ribosomal subunit protein uS11c (138 aa).

The tract at residues 1–21 (MTKAIQKIGSRRNGRIASRKN) is disordered. The span at 9–21 (GSRRNGRIASRKN) shows a compositional bias: basic residues.

It belongs to the universal ribosomal protein uS11 family. Part of the 30S ribosomal subunit.

The protein resides in the plastid. The protein localises to the chloroplast. In Ceratophyllum demersum (Rigid hornwort), this protein is Small ribosomal subunit protein uS11c.